A 523-amino-acid polypeptide reads, in one-letter code: Aldehyde oxidase GLOX (523 aa).

The N-terminal stretch at 1-19 (MILDAAIVALADLPGTWEL) is a signal peptide.

The protein localises to the secreted. It is found in the cell wall. The enzyme catalyses an aldehyde + O2 + H2O = a carboxylate + H2O2 + H(+). In terms of biological role, catalyzes the oxidation of aldehydes to the corresponding carboxylate by coupling the reaction to the reduction of dioxygen to hydrogen peroxide. Substrates include glyoxal and other aldehydes. Involved in disease resistance against the grapevine powdery mildew E.necator. Is sufficient to confer disease resistance to E.necator. Can produce hydrogen peroxide in response to E.necator infection, and this may directly play a role in the defense mechanism during plant-pathogen interactions. This is Aldehyde oxidase GLOX from Vitis pseudoreticulata (Chinese wild grapevine).